Reading from the N-terminus, the 810-residue chain is MQRKELVLLFLLFLQPGHGIPLDDYVTTQGASLCSSTKKQLSVGSTEECAVKCEKETSFICRSFQYHSKEQQCVIMAENSKSTPVLRMRDVILFEKKMYLSECKVGNGKYYRGTVSKTKTGLTCQKWSAETPHKPRFSPDENPSEGLDQNYCRNPDNDPKGPWCYTMDPEVRYEYCEIIQCEDECMHCSGQNYVGKISRTMSGLECQPWDSQIPHPHGFIPSKFPSKNLKMNYCRNPDGEPRPWCFTMDRNKRWEYCDIPRCTTPPPPSGPTYQCLMGNGEHYQGNVAVTVSGLTCQRWGEQSPHRHDRTPENYPCKNLDENYCRNPDGEPAPWCFTTNSSVRWEFCKIPDCVSSASETEHSDAPVIVPPEQTPVVQECYQGNGQTYRGTSSTTITGKKCQPWTSMRPHRHSKTPENYPDADLTMNYCRNPDGDKGPWCYTTDPSVRWEFCNLKKCSGTEMSATNSSPVQVSSASESSEQDCIIDNGKGYRGTKATTGAGTPCQAWAAQEPHRHSIFTPETNPRADLQENYCRNPDGDANGPWCYTTNPRKLFDYCDIPHCVSPSSADCGKPKVEPKKCPGRVGGCVAHPHSWPWQVSLRRFGQHFCGGTLISPEWVVTAAHCLEKFSNPAIYKVVLGAHQETRLERDVQIKGVTKMFLEPYRADIALLKLSSPAIITDKDHPACLPNSNYMVADRSLCYITGWGETKGTYGAGLLKEAQLPVIENKVCNRQSFLNGRVRSTELCAGHLAGGVDSCQGDSGGPLVCFEKDRYILQGVTSWGLGCARLTRPGVYVRVSRYVSWLQDVMRNN.

The signal sequence occupies residues 1 to 19 (MQRKELVLLFLLFLQPGHG). In terms of domain architecture, PAN spans 20-98 (IPLDDYVTTQ…RDVILFEKKM (79 aa)). Intrachain disulfides connect C49/C73, C53/C61, C103/C181, C124/C164, C152/C176, C185/C262, C188/C316, C206/C245, C234/C257, C275/C352, C296/C335, C324/C347, C379/C456, C400/C439, C428/C451, C482/C561, C503/C544, C532/C556, C569/C685, C579/C586, C607/C623, C699/C766, C729/C745, and C756/C784. 5 consecutive Kringle domains span residues 103 to 181 (CKVG…IIQC), 185 to 262 (CMHC…IPRC), 275 to 352 (CLMG…IPDC), 379 to 456 (CYQG…LKKC), and 482 to 561 (CIID…IPHC). N339 carries an N-linked (GlcNAc...) asparagine glycan. The interval 398-418 (KKCQPWTSMRPHRHSKTPENY) is disordered. A Peptidase S1 domain is found at 582-808 (RVGGCVAHPH…YVSWLQDVMR (227 aa)). S598 carries the phosphoserine modification. Catalysis depends on charge relay system residues H622 and D665. S760 functions as the Charge relay system in the catalytic mechanism.

The protein belongs to the peptidase S1 family. Plasminogen subfamily. As to quaternary structure, interacts with CSPG4 and AMOT. Interacts (via the Kringle domains) with HRG; the interaction tethers PLG to the cell surface and enhances its activation. Interacts (via Kringle 4 domain) with ADA; the interaction stimulates PLG activation when in complex with DPP4. Angiostatin: Interacts with ATP5F1A; the interaction inhibits most of the angiogenic effects of angiostatin. In terms of processing, in the presence of the inhibitor, the activation involves only cleavage after Arg-582, yielding two chains held together by two disulfide bonds. In the absence of the inhibitor, the activation involves additionally the removal of the activation peptide.

It is found in the secreted. The catalysed reaction is Preferential cleavage: Lys-|-Xaa &gt; Arg-|-Xaa, higher selectivity than trypsin. Converts fibrin into soluble products.. With respect to regulation, converted into plasmin by plasminogen activators, both plasminogen and its activator being bound to fibrin. Cannot be activated with streptokinase. Its function is as follows. Plasmin dissolves the fibrin of blood clots and acts as a proteolytic factor in a variety of other processes including embryonic development, tissue remodeling, tumor invasion, and inflammation. In ovulation, weakens the walls of the Graafian follicle. It activates the urokinase-type plasminogen activator, collagenases and several complement zymogens, such as C1, C4 and C5. Cleavage of fibronectin and laminin leads to cell detachment and apoptosis. Also cleaves fibrin, thrombospondin and von Willebrand factor. Its role in tissue remodeling and tumor invasion may be modulated by CSPG4. Binds to cells. This is Plasminogen (PLG) from Erinaceus europaeus (Western European hedgehog).